A 154-amino-acid chain; its full sequence is Ribosomal RNA large subunit methyltransferase H (154 aa).

S-adenosyl-L-methionine is bound by residues Leu70, Gly102, and 121-126; that span reads LSRMTL.

The protein belongs to the RNA methyltransferase RlmH family. In terms of assembly, homodimer.

The protein localises to the cytoplasm. It carries out the reaction pseudouridine(1915) in 23S rRNA + S-adenosyl-L-methionine = N(3)-methylpseudouridine(1915) in 23S rRNA + S-adenosyl-L-homocysteine + H(+). Functionally, specifically methylates the pseudouridine at position 1915 (m3Psi1915) in 23S rRNA. This Geobacter sp. (strain M21) protein is Ribosomal RNA large subunit methyltransferase H.